The following is a 66-amino-acid chain: Alpha-conotoxin GIB (66 aa).

Residues 1-21 (MGMRMMFTVFLLVVLATTVVS) form the signal peptide. Residues 22–49 (FPSERASDGRDDTAKDEGSDMEKLVEKK) constitute a propeptide that is removed on maturation. 2 disulfides stabilise this stretch: Cys-51-Cys-56 and Cys-52-Cys-62. Gly-64 carries the post-translational modification Glycine amide.

This sequence belongs to the conotoxin A superfamily. In terms of tissue distribution, expressed by the venom duct.

It localises to the secreted. Alpha-conotoxins act on postsynaptic membranes, they bind to the nicotinic acetylcholine receptors (nAChR) and thus inhibit them. Both the globular (with C1-C3; C2-C4 disulfide pattern) and ribbon (C1-C4; C2-C3) isomers reversibly inhibit human muscle-type alpha-1-beta-1-delta-epsilon/CHRNA1-CHRNB1-CHRND-CHRNE nAChRs (IC(50)=116 nM and IC(50)=643 nM, respectively). Both isomers also inhibit alpha-7/CHRNA7 and alpha-9-alpha-10/CHRNA9-CHRNA10 (IC(50)=1113 nM by globular isomer) nAChRs. The protein is Alpha-conotoxin GIB of Conus geographus (Geography cone).